A 676-amino-acid chain; its full sequence is Intraflagellar transport protein 81 homolog (676 aa).

At Ser-2 the chain carries N-acetylserine. The segment at 2-121 (SDQIKFIMDS…LKKRAYLARF (120 aa)) is CH (calponin-homology)-like region. Thr-61 is modified (phosphothreonine). 4 coiled-coil regions span residues 132–258 (LQDE…ADAK), 306–389 (HSDL…FDGT), 416–456 (QIIA…KGIS), and 490–622 (VKKL…REKQ).

This sequence belongs to the IFT81 family. Component of the IFT complex B, at least composed of IFT20, IFT22, IFT25, IFT27, IFT46, IFT52, TRAF3IP1/IFT54, IFT57, IFT74, IFT80, IFT81, and IFT88. Interacts with IFT74; the interaction is direct: within the IFT complex B, IFT74 and IFT81 mediate the transport of tubulin within the cilium. Interacts with tubulin; the interaction is direct. Interacts with IFT57 and IFT70B. Interacts with RABL2/RABL2A; binding is equal in the presence of GTP or GDP. Interacts with IFT88. Interacts (via the IFT74/IFT81 heterodimer) with RABL2B. Interacts with CFAP61. Highly expressed in testis, moderately in ovary, heart, liver, skeletal muscle, kidney and pancreas, low in prostate, brain, placenta and lung and not detected in spleen, thymus, small intestine and colon. Isoform CDV-1R is abundantly expressed in testis.

It localises to the cell projection. The protein localises to the cilium. The protein resides in the cytoplasm. Its subcellular location is the cytoskeleton. It is found in the cilium basal body. Component of the intraflagellar transport (IFT) complex B: together with IFT74, forms a tubulin-binding module that specifically mediates transport of tubulin within the cilium. Binds tubulin via its CH (calponin-homology)-like region. Required for ciliogenesis. Required for proper regulation of SHH signaling. Plays an important role during spermatogenesis by modulating the assembly and elongation of the sperm flagella. The sequence is that of Intraflagellar transport protein 81 homolog (IFT81) from Homo sapiens (Human).